A 238-amino-acid chain; its full sequence is MRINFKLILIILTSFYGIINCQSTCPYSKTVINGASATFYSAMDNGNCGFGKLTGPTGPGNYMIAALGTKLYQNGAQCGQCFKISNSKNASVTVMATDSCNDAGYCQRDNHFDLSPTAFSILGAQSQGVLDGLSYVKVPCRVSGNVKVMLKDGSNAYWTSFLVFNNAIDVKQVSIKLSGSSTYVPLTQTTYNYWPSSITAGSFQVRIESIGGEFIYVTIPSVVSSKIYDTGSQFSSSC.

The N-terminal stretch at 1–21 (MRINFKLILIILTSFYGIINC) is a signal peptide. The region spanning 45 to 145 (NGNCGFGKLT…VKVPCRVSGN (101 aa)) is the Expansin-like EG45 domain. 2 disulfides stabilise this stretch: cysteine 48–cysteine 78 and cysteine 81–cysteine 140. A glycan (N-linked (GlcNAc...) asparagine) is linked at asparagine 89.

The protein belongs to the expansin family. Expansin A subfamily.

It localises to the secreted. May serve to lubricate the movement of the cellulose microfibrils during cell growth and wall extension and/or may serve to maintain the fluid state of the slug cell wall. This is Expansin-like protein 5 (expl5) from Dictyostelium discoideum (Social amoeba).